Consider the following 432-residue polypeptide: Enolase (432 aa).

Gln168 contributes to the (2R)-2-phosphoglycerate binding site. The active-site Proton donor is the Glu210. Asp247, Glu288, and Asp315 together coordinate Mg(2+). (2R)-2-phosphoglycerate-binding residues include Lys340, Arg369, Ser370, and Lys391. The Proton acceptor role is filled by Lys340.

This sequence belongs to the enolase family. Mg(2+) is required as a cofactor.

The protein localises to the cytoplasm. The protein resides in the secreted. Its subcellular location is the cell surface. The catalysed reaction is (2R)-2-phosphoglycerate = phosphoenolpyruvate + H2O. Its pathway is carbohydrate degradation; glycolysis; pyruvate from D-glyceraldehyde 3-phosphate: step 4/5. Its function is as follows. Catalyzes the reversible conversion of 2-phosphoglycerate (2-PG) into phosphoenolpyruvate (PEP). It is essential for the degradation of carbohydrates via glycolysis. The chain is Enolase from Microcystis aeruginosa (strain NIES-843 / IAM M-2473).